We begin with the raw amino-acid sequence, 393 residues long: Formate-dependent phosphoribosylglycinamide formyltransferase (393 aa).

N(1)-(5-phospho-beta-D-ribosyl)glycinamide is bound by residues 22–23 and Glu82; that span reads EL. Residues Arg114, Lys155, 160–165, 195–198, and Glu203 each bind ATP; these read SSGHGQ and EGFV. The 190-residue stretch at 119 to 308 folds into the ATP-grasp domain; the sequence is RLAAEELGLP…EFALHARAIL (190 aa). Residues Glu267 and Glu279 each contribute to the Mg(2+) site. Residues Asp286, Lys356, and 363–364 contribute to the N(1)-(5-phospho-beta-D-ribosyl)glycinamide site; that span reads RR.

Belongs to the PurK/PurT family. As to quaternary structure, homodimer.

It catalyses the reaction N(1)-(5-phospho-beta-D-ribosyl)glycinamide + formate + ATP = N(2)-formyl-N(1)-(5-phospho-beta-D-ribosyl)glycinamide + ADP + phosphate + H(+). The protein operates within purine metabolism; IMP biosynthesis via de novo pathway; N(2)-formyl-N(1)-(5-phospho-D-ribosyl)glycinamide from N(1)-(5-phospho-D-ribosyl)glycinamide (formate route): step 1/1. Functionally, involved in the de novo purine biosynthesis. Catalyzes the transfer of formate to 5-phospho-ribosyl-glycinamide (GAR), producing 5-phospho-ribosyl-N-formylglycinamide (FGAR). Formate is provided by PurU via hydrolysis of 10-formyl-tetrahydrofolate. The chain is Formate-dependent phosphoribosylglycinamide formyltransferase from Pasteurella multocida (strain Pm70).